The sequence spans 540 residues: Aquaporin-5 (540 aa).

The interval 1–224 is disordered; the sequence is MSGEGTDLPT…ESIDGYNYES (224 aa). At 1 to 263 the chain is on the cytoplasmic side; that stretch reads MSGEGTDLPT…QWMNSNFKNH (263 aa). The span at 25–44 shows a compositional bias: polar residues; it reads PGSSQQQLVPIAHTISSPSK. Basic and acidic residues-rich tracts occupy residues 119 to 133, 140 to 155, 174 to 194, and 204 to 214; these read RARE…EREN, RARD…ERSR, YFDD…KGMR, and SGEKVRRKSTD. The chain crosses the membrane as a helical span at residues 264–284; the sequence is FVATIGEFVGTTMFLFFAFAG. Residues 285-308 are Extracellular-facing; that stretch reads TQVANIDSNTVNTTTGAATGFNIA. N-linked (GlcNAc...) asparagine glycosylation is present at Asn-296. A helical membrane pass occupies residues 309 to 329; that stretch reads VQLYIAVIFGFSLMVNVWIFF. Residues 330 to 332 lie on the Cytoplasmic side of the membrane; the sequence is RIS. Residues 333–353 form a helical membrane-spanning segment; it reads GGLFNPAVTLGMVLVGAIPIP. Topologically, residues 354 to 356 are extracellular; it reads RAA. Residues 357–377 form a helical membrane-spanning segment; sequence CLFFAQILGGIAASGMVLGLF. Residues 378 to 393 lie on the Cytoplasmic side of the membrane; that stretch reads PTTFNVRTTLGASTST. Residues 394 to 414 traverse the membrane as a helical segment; it reads VQGVFIEAILTAELVFTIFML. Topologically, residues 415 to 420 are extracellular; that stretch reads AKEKHK. A helical transmembrane segment spans residues 421–441; sequence ATFIAPVGIGLALFIAEMVGV. Over 442–467 the chain is Cytoplasmic; it reads YYTGGSLNPARSFGPCVVSGSFDKEH. Residues 468-488 traverse the membrane as a helical segment; that stretch reads WIYWIGPITGTFIAVFFYKFI. Topologically, residues 489–540 are extracellular; sequence KMLEYEMANPGQDGDAKNDPTQNEKKREQILEERNRRYEKRNGSLRPGSRLS. The tract at residues 499-540 is disordered; sequence GQDGDAKNDPTQNEKKREQILEERNRRYEKRNGSLRPGSRLS. Positions 502–530 are enriched in basic and acidic residues; sequence GDAKNDPTQNEKKREQILEERNRRYEKRN. An N-linked (GlcNAc...) asparagine glycan is attached at Asn-530.

The protein belongs to the MIP/aquaporin (TC 1.A.8) family.

Its subcellular location is the membrane. The catalysed reaction is H2O(in) = H2O(out). Its function is as follows. Water channel required to facilitate the transport of water across membranes. May play a role in the vegetative growth. This is Aquaporin-5 from Botryotinia fuckeliana (strain B05.10) (Noble rot fungus).